The primary structure comprises 423 residues: Glutamate-1-semialdehyde 2,1-aminomutase (423 aa).

K266 is subject to N6-(pyridoxal phosphate)lysine.

This sequence belongs to the class-III pyridoxal-phosphate-dependent aminotransferase family. HemL subfamily. Homodimer. Pyridoxal 5'-phosphate is required as a cofactor.

Its subcellular location is the cytoplasm. The enzyme catalyses (S)-4-amino-5-oxopentanoate = 5-aminolevulinate. Its pathway is porphyrin-containing compound metabolism; protoporphyrin-IX biosynthesis; 5-aminolevulinate from L-glutamyl-tRNA(Glu): step 2/2. The polypeptide is Glutamate-1-semialdehyde 2,1-aminomutase (Nitratidesulfovibrio vulgaris (strain DP4) (Desulfovibrio vulgaris)).